Reading from the N-terminus, the 205-residue chain is Thymidylate kinase (205 aa).

11-18 (GLDKSGKT) is an ATP binding site.

Belongs to the thymidylate kinase family. Homodimer; the dimer arrangement is orthogonal and not antiparallel as in human enzyme.

The catalysed reaction is dTMP + ATP = dTDP + ADP. It participates in pyrimidine metabolism; dTTP biosynthesis. In terms of biological role, poxvirus TMP kinase is able to phosphorylate dTMP, dUMP and also dGMP from any purine and pyrimidine nucleoside triphosphate. The large substrate specificity is explained by the presence of a canal connecting the edge of the dimer interface to the TMP base binding pocket, canal not found in the human homolog. The protein is Thymidylate kinase (OPG178) of Homo sapiens (Human).